The chain runs to 387 residues: Carboxynorspermidine/carboxyspermidine decarboxylase (387 aa).

Position 51 is an N6-(pyridoxal phosphate)lysine (K51). Positions 248 and 284 each coordinate substrate.

The protein belongs to the Orn/Lys/Arg decarboxylase class-II family. NspC subfamily. As to quaternary structure, homodimer. It depends on pyridoxal 5'-phosphate as a cofactor.

It is found in the cytoplasm. It carries out the reaction carboxynorspermidine + H(+) = norspermidine + CO2. The catalysed reaction is carboxyspermidine + H(+) = spermidine + CO2. Functionally, catalyzes the decarboxylation of carboxynorspermidine and carboxyspermidine. Essential for biofilm formation. The chain is Carboxynorspermidine/carboxyspermidine decarboxylase from Vibrio cholerae serotype O1 (strain ATCC 39315 / El Tor Inaba N16961).